The primary structure comprises 547 residues: Chaperonin GroEL (547 aa).

ATP is bound by residues 29-32 (TLGP), 86-90 (DGTTT), G413, and D498.

The protein belongs to the chaperonin (HSP60) family. In terms of assembly, forms a cylinder of 14 subunits composed of two heptameric rings stacked back-to-back. Interacts with the co-chaperonin GroES.

It is found in the cytoplasm. The enzyme catalyses ATP + H2O + a folded polypeptide = ADP + phosphate + an unfolded polypeptide.. Together with its co-chaperonin GroES, plays an essential role in assisting protein folding. The GroEL-GroES system forms a nano-cage that allows encapsulation of the non-native substrate proteins and provides a physical environment optimized to promote and accelerate protein folding. The chain is Chaperonin GroEL from Herpetosiphon aurantiacus (strain ATCC 23779 / DSM 785 / 114-95).